We begin with the raw amino-acid sequence, 77 residues long: Acyl carrier protein (77 aa).

The 76-residue stretch at 1–76 (MSIEERVKKI…SAIDYVAKAN (76 aa)) folds into the Carrier domain. Serine 36 carries the O-(pantetheine 4'-phosphoryl)serine modification.

This sequence belongs to the acyl carrier protein (ACP) family. In terms of processing, 4'-phosphopantetheine is transferred from CoA to a specific serine of apo-ACP by AcpS. This modification is essential for activity because fatty acids are bound in thioester linkage to the sulfhydryl of the prosthetic group.

It localises to the cytoplasm. It participates in lipid metabolism; fatty acid biosynthesis. Carrier of the growing fatty acid chain in fatty acid biosynthesis. In Haemophilus ducreyi (strain 35000HP / ATCC 700724), this protein is Acyl carrier protein.